The sequence spans 541 residues: Chaperonin GroEL (541 aa).

ATP is bound by residues 29-32, 86-90, Gly-413, and Asp-494; these read TIGP and DGTTT.

This sequence belongs to the chaperonin (HSP60) family. As to quaternary structure, forms a cylinder of 14 subunits composed of two heptameric rings stacked back-to-back. Interacts with the co-chaperonin GroES.

It is found in the cytoplasm. The enzyme catalyses ATP + H2O + a folded polypeptide = ADP + phosphate + an unfolded polypeptide.. In terms of biological role, together with its co-chaperonin GroES, plays an essential role in assisting protein folding. The GroEL-GroES system forms a nano-cage that allows encapsulation of the non-native substrate proteins and provides a physical environment optimized to promote and accelerate protein folding. The polypeptide is Chaperonin GroEL (Lachnospira eligens (strain ATCC 27750 / DSM 3376 / VPI C15-48 / C15-B4) (Eubacterium eligens)).